The primary structure comprises 272 residues: Zinc transporter ZupT (272 aa).

8 consecutive transmembrane segments (helical) span residues 11 to 31 (IALA…LMVV), 40 to 60 (LLAF…LTEI), 76 to 96 (LGFT…MVID), 126 to 146 (LMTA…TFFA), 158 to 178 (AFAI…PVYF), 189 to 209 (ASLL…LALF), 211 to 231 (VLSD…MVFL), and 250 to 270 (VYGL…FRFA). Fe(2+) is bound by residues asparagine 136 and glutamate 139. Zn(2+) contacts are provided by glutamate 139 and histidine 164. Fe(2+)-binding residues include asparagine 165, glutamate 168, and glutamate 197. Glutamate 168 is a Zn(2+) binding site.

This sequence belongs to the ZIP transporter (TC 2.A.5) family. ZupT subfamily.

It is found in the cell inner membrane. It carries out the reaction Zn(2+)(in) = Zn(2+)(out). Its function is as follows. Mediates zinc uptake. May also transport other divalent cations. The chain is Zinc transporter ZupT from Xanthomonas axonopodis pv. citri (strain 306).